The following is a 142-amino-acid chain: Anti-sigma F factor (142 aa).

It belongs to the anti-sigma-factor family.

The enzyme catalyses L-seryl-[protein] + ATP = O-phospho-L-seryl-[protein] + ADP + H(+). The catalysed reaction is L-threonyl-[protein] + ATP = O-phospho-L-threonyl-[protein] + ADP + H(+). Functionally, binds to sigma F and blocks its ability to form an RNA polymerase holoenzyme (E-sigma F). Phosphorylates SpoIIAA on a serine residue. This phosphorylation may enable SpoIIAA to act as an anti-anti-sigma factor that counteracts SpoIIAB and thus releases sigma F from inhibition. This Clostridium kluyveri (strain NBRC 12016) protein is Anti-sigma F factor.